The chain runs to 297 residues: Thiosulfate sulfurtransferase (297 aa).

At lysine 14 the chain carries N6-acetyllysine; alternate. The residue at position 14 (lysine 14) is an N6-succinyllysine; alternate. Positions 25-143 (LGPSLRVLDA…WLKEGHPVTS (119 aa)) constitute a Rhodanese 1 domain. The O-linked (GlcNAc) serine glycan is linked to serine 35. Residue serine 38 is modified to Phosphoserine. At lysine 136 the chain carries N6-acetyllysine; alternate. Lysine 136 is subject to N6-succinyllysine; alternate. The interval 144–159 (EPSRPEPAVFKATLNL) is hinge. An N6-acetyllysine modification is found at lysine 163. The region spanning 173–288 (QSKRFQLVDS…WFRRAPPETR (116 aa)) is the Rhodanese 2 domain. The residue at position 175 (lysine 175) is an N6-acetyllysine; alternate. Residue lysine 175 is modified to N6-succinyllysine; alternate. Arginine 187 contacts substrate. N6-acetyllysine; alternate is present on residues lysine 219 and lysine 224. Residues lysine 219 and lysine 224 each carry the N6-succinyllysine; alternate modification. Lysine 236 carries the N6-acetyllysine modification. The residue at position 237 (lysine 237) is an N6-acetyllysine; alternate. The residue at position 237 (lysine 237) is an N6-succinyllysine; alternate. The Cysteine persulfide intermediate role is filled by cysteine 248. Lysine 250 contacts substrate.

As to quaternary structure, monomer. Expressed in numerous tissues.

It localises to the mitochondrion matrix. The enzyme catalyses thiosulfate + hydrogen cyanide = thiocyanate + sulfite + 2 H(+). In terms of biological role, together with MRPL18, acts as a mitochondrial import factor for the cytosolic 5S rRNA. Only the nascent unfolded cytoplasmic form is able to bind to the 5S rRNA. Formation of iron-sulfur complexes and cyanide detoxification. The chain is Thiosulfate sulfurtransferase (Tst) from Mus musculus (Mouse).